The sequence spans 230 residues: Metaxin-2 homolog (230 aa).

Belongs to the metaxin family. In terms of assembly, associates with the mitochondrial contact site and cristae organizing system (MICOS) complex (also known as MINOS or MitOS complex).

The protein resides in the mitochondrion outer membrane. In terms of biological role, involved in transport of proteins into the mitochondrion. In Caenorhabditis elegans, this protein is Metaxin-2 homolog (mtx-2).